Reading from the N-terminus, the 245-residue chain is 5'-nucleotidase SurE (245 aa).

Residues D8, D9, S39, and N91 each coordinate a divalent metal cation.

It belongs to the SurE nucleotidase family. Requires a divalent metal cation as cofactor.

It localises to the cytoplasm. The enzyme catalyses a ribonucleoside 5'-phosphate + H2O = a ribonucleoside + phosphate. Its function is as follows. Nucleotidase that shows phosphatase activity on nucleoside 5'-monophosphates. This Janthinobacterium sp. (strain Marseille) (Minibacterium massiliensis) protein is 5'-nucleotidase SurE.